We begin with the raw amino-acid sequence, 40 residues long: Dihydrolipoyl dehydrogenase (40 aa).

36–40 is an FAD binding site; sequence EKRGT.

Belongs to the class-I pyridine nucleotide-disulfide oxidoreductase family. Homodimer. Requires FAD as cofactor.

Its subcellular location is the mitochondrion matrix. It catalyses the reaction N(6)-[(R)-dihydrolipoyl]-L-lysyl-[protein] + NAD(+) = N(6)-[(R)-lipoyl]-L-lysyl-[protein] + NADH + H(+). In terms of biological role, lipoamide dehydrogenase is a component of the glycine cleavage system as well as of the alpha-ketoacid dehydrogenase complexes. The pyruvate dehydrogenase complex contains multiple copies of three enzymatic components: pyruvate dehydrogenase (E1), dihydrolipoamide acetyltransferase (E2) and lipoamide dehydrogenase (E3). The polypeptide is Dihydrolipoyl dehydrogenase (Solanum tuberosum (Potato)).